The primary structure comprises 425 residues: Enolase (425 aa).

The disordered stretch occupies residues Thr-31–Asp-54. Over residues Gly-43–Asp-54 the composition is skewed to basic and acidic residues. A (2R)-2-phosphoglycerate-binding site is contributed by Gln-162. Glu-204 acts as the Proton donor in catalysis. Asp-241, Glu-285, and Asp-312 together coordinate Mg(2+). Residues Lys-337, Arg-366, Ser-367, and Lys-388 each contribute to the (2R)-2-phosphoglycerate site. Lys-337 (proton acceptor) is an active-site residue.

Belongs to the enolase family. It depends on Mg(2+) as a cofactor.

It localises to the cytoplasm. The protein resides in the secreted. Its subcellular location is the cell surface. It catalyses the reaction (2R)-2-phosphoglycerate = phosphoenolpyruvate + H2O. It functions in the pathway carbohydrate degradation; glycolysis; pyruvate from D-glyceraldehyde 3-phosphate: step 4/5. In terms of biological role, catalyzes the reversible conversion of 2-phosphoglycerate (2-PG) into phosphoenolpyruvate (PEP). It is essential for the degradation of carbohydrates via glycolysis. In Gloeobacter violaceus (strain ATCC 29082 / PCC 7421), this protein is Enolase.